The primary structure comprises 126 residues: Large ribosomal subunit protein uL22 (126 aa).

This sequence belongs to the universal ribosomal protein uL22 family. In terms of assembly, part of the 50S ribosomal subunit.

In terms of biological role, this protein binds specifically to 23S rRNA; its binding is stimulated by other ribosomal proteins, e.g. L4, L17, and L20. It is important during the early stages of 50S assembly. It makes multiple contacts with different domains of the 23S rRNA in the assembled 50S subunit and ribosome. Functionally, the globular domain of the protein is located near the polypeptide exit tunnel on the outside of the subunit, while an extended beta-hairpin is found that lines the wall of the exit tunnel in the center of the 70S ribosome. The sequence is that of Large ribosomal subunit protein uL22 from Phenylobacterium zucineum (strain HLK1).